Here is an 83-residue protein sequence, read N- to C-terminus: Small ribosomal subunit protein eS21 (83 aa).

It belongs to the eukaryotic ribosomal protein eS21 family. As to quaternary structure, component of the 40S small ribosomal subunit. Interacts with sta.

It localises to the cytoplasm. It is found in the cytosol. The protein resides in the rough endoplasmic reticulum. The chain is Small ribosomal subunit protein eS21 (RpS21) from Ceratitis capitata (Mediterranean fruit fly).